The sequence spans 120 residues: Flagellar transcriptional regulator FlhD (120 aa).

The protein belongs to the FlhD family. Homodimer; disulfide-linked. Forms a heterohexamer composed of two FlhC and four FlhD subunits. Each FlhC binds a FlhD dimer, forming a heterotrimer, and a hexamer assembles by dimerization of two heterotrimers.

It is found in the cytoplasm. Functions in complex with FlhC as a master transcriptional regulator that regulates transcription of several flagellar and non-flagellar operons by binding to their promoter region. Activates expression of class 2 flagellar genes, including fliA, which is a flagellum-specific sigma factor that turns on the class 3 genes. Also regulates genes whose products function in a variety of physiological pathways. This chain is Flagellar transcriptional regulator FlhD, found in Erwinia tasmaniensis (strain DSM 17950 / CFBP 7177 / CIP 109463 / NCPPB 4357 / Et1/99).